We begin with the raw amino-acid sequence, 178 residues long: NADH-quinone oxidoreductase subunit B 1 (178 aa).

[4Fe-4S] cluster-binding residues include Cys39, Cys40, Cys104, and Cys135.

The protein belongs to the complex I 20 kDa subunit family. As to quaternary structure, NDH-1 is composed of 14 different subunits. Subunits NuoB, C, D, E, F, and G constitute the peripheral sector of the complex. [4Fe-4S] cluster is required as a cofactor.

The protein localises to the cell inner membrane. It catalyses the reaction a quinone + NADH + 5 H(+)(in) = a quinol + NAD(+) + 4 H(+)(out). Functionally, NDH-1 shuttles electrons from NADH, via FMN and iron-sulfur (Fe-S) centers, to quinones in the respiratory chain. The immediate electron acceptor for the enzyme in this species is believed to be a menaquinone. Couples the redox reaction to proton translocation (for every two electrons transferred, four hydrogen ions are translocated across the cytoplasmic membrane), and thus conserves the redox energy in a proton gradient. The sequence is that of NADH-quinone oxidoreductase subunit B 1 from Cytophaga hutchinsonii (strain ATCC 33406 / DSM 1761 / CIP 103989 / NBRC 15051 / NCIMB 9469 / D465).